Here is a 169-residue protein sequence, read N- to C-terminus: NADH-quinone oxidoreductase subunit B (169 aa).

[4Fe-4S] cluster contacts are provided by cysteine 42, cysteine 43, cysteine 107, and cysteine 136.

The protein belongs to the complex I 20 kDa subunit family. NDH-1 is composed of 14 different subunits. Subunits NuoB, C, D, E, F, and G constitute the peripheral sector of the complex. It depends on [4Fe-4S] cluster as a cofactor.

The protein resides in the cell inner membrane. It catalyses the reaction a quinone + NADH + 5 H(+)(in) = a quinol + NAD(+) + 4 H(+)(out). Its function is as follows. NDH-1 shuttles electrons from NADH, via FMN and iron-sulfur (Fe-S) centers, to quinones in the respiratory chain. The immediate electron acceptor for the enzyme in this species is believed to be ubiquinone. Couples the redox reaction to proton translocation (for every two electrons transferred, four hydrogen ions are translocated across the cytoplasmic membrane), and thus conserves the redox energy in a proton gradient. This chain is NADH-quinone oxidoreductase subunit B, found in Wolinella succinogenes (strain ATCC 29543 / DSM 1740 / CCUG 13145 / JCM 31913 / LMG 7466 / NCTC 11488 / FDC 602W) (Vibrio succinogenes).